Consider the following 135-residue polypeptide: Sex-regulated protein janus-A (135 aa).

Lys37 contacts substrate. Catalysis depends on His63, which acts as the Proton acceptor. 104–106 (SQG) contacts substrate.

The protein belongs to the janus family.

In terms of biological role, janA and janB regulate somatic sex differentiation. The polypeptide is Sex-regulated protein janus-A (janA) (Drosophila yakuba (Fruit fly)).